Here is a 476-residue protein sequence, read N- to C-terminus: Argininosuccinate lyase (476 aa).

This sequence belongs to the lyase 1 family. Argininosuccinate lyase subfamily.

The protein resides in the cytoplasm. It catalyses the reaction 2-(N(omega)-L-arginino)succinate = fumarate + L-arginine. Its pathway is amino-acid biosynthesis; L-arginine biosynthesis; L-arginine from L-ornithine and carbamoyl phosphate: step 3/3. The protein is Argininosuccinate lyase of Nitrosospira multiformis (strain ATCC 25196 / NCIMB 11849 / C 71).